The chain runs to 63 residues: Large ribosomal subunit protein bL28 (63 aa).

It belongs to the bacterial ribosomal protein bL28 family.

The polypeptide is Large ribosomal subunit protein bL28 (Clostridium perfringens (strain ATCC 13124 / DSM 756 / JCM 1290 / NCIMB 6125 / NCTC 8237 / Type A)).